The following is a 212-amino-acid chain: Probable GTP-binding protein EngB (212 aa).

The region spanning 40–212 is the EngB-type G domain; it reads SLPEIAFVGK…KASLAKCIKA (173 aa). GTP contacts are provided by residues 48 to 55, 75 to 79, 93 to 96, 160 to 163, and 191 to 193; these read GKSNVGKS, GRTRQ, DLPG, TKSD, and VSS. Mg(2+) is bound by residues S55 and T77.

This sequence belongs to the TRAFAC class TrmE-Era-EngA-EngB-Septin-like GTPase superfamily. EngB GTPase family. Mg(2+) is required as a cofactor.

Functionally, necessary for normal cell division and for the maintenance of normal septation. The protein is Probable GTP-binding protein EngB of Rickettsia akari (strain Hartford).